Consider the following 443-residue polypeptide: GTPase Der (443 aa).

EngA-type G domains are found at residues 3-167 (PVIA…PEEK) and 176-349 (IKIA…QSIQ). Residues 9 to 16 (GRPNVGKS), 56 to 60 (DTGGL), 119 to 122 (NKAD), 182 to 189 (GRPNVGKS), 229 to 233 (DTAGI), and 294 to 297 (NKWD) each bind GTP. Residues 350 to 434 (QELTTGQLTR…PVHIKLKTDP (85 aa)) form the KH-like domain.

This sequence belongs to the TRAFAC class TrmE-Era-EngA-EngB-Septin-like GTPase superfamily. EngA (Der) GTPase family. As to quaternary structure, associates with the 50S ribosomal subunit.

Functionally, GTPase that plays an essential role in the late steps of ribosome biogenesis. The sequence is that of GTPase Der from Coxiella burnetii (strain CbuK_Q154) (Coxiella burnetii (strain Q154)).